A 315-amino-acid chain; its full sequence is MDGVVIKNTGSQYLVRCTDGTELYCMAKGNLRLKGIRSTNPVAVGDRVEIVPASQDGQPAYIKRIHPRRNYIIRRASNLSKESHILGANLDAAVLVCTINDPVTTTVFIDRFLATAEAYRVPVILAFNKIDCYTQEDRLQLDRLSAVYTAIGYPCCHVSAITGEGLPDLKSLLDGKLTLLAGHSGVGKSSLINALIPHADLRTGAISQAHHTGMHTTTFSQMIDFPDLSPGSALIDTPGIKGFGTLEMGEYEVSHYFPEIFAASKGCRFGNCTHTHEPGCAVLEALRRGEIAESRYISYLSILEDENAERYRPEY.

The CP-type G domain occupies Leu-79–Phe-243. GTP contacts are provided by residues Asn-128–Asp-131 and Gly-182–Ser-190. Zn(2+)-binding residues include Cys-267, Cys-272, His-274, and Cys-280.

It belongs to the TRAFAC class YlqF/YawG GTPase family. RsgA subfamily. In terms of assembly, monomer. Associates with 30S ribosomal subunit, binds 16S rRNA. It depends on Zn(2+) as a cofactor.

It localises to the cytoplasm. In terms of biological role, one of several proteins that assist in the late maturation steps of the functional core of the 30S ribosomal subunit. Helps release RbfA from mature subunits. May play a role in the assembly of ribosomal proteins into the subunit. Circularly permuted GTPase that catalyzes slow GTP hydrolysis, GTPase activity is stimulated by the 30S ribosomal subunit. The polypeptide is Small ribosomal subunit biogenesis GTPase RsgA (Porphyromonas gingivalis (strain ATCC 33277 / DSM 20709 / CIP 103683 / JCM 12257 / NCTC 11834 / 2561)).